The following is a 123-amino-acid chain: Beta-defensin 126 (123 aa).

An N-terminal signal peptide occupies residues 1-20 (MKSLLFTLAVFMLLAQLVSG). Residues 21 to 63 (NLYVKRCLNDIGICKKTCKPEEVRSEHGWVMCGKRKACCVPAD) are in vitro binds to LPS, mediates antimicrobial activity and inhibits LPS-mediated inflammation. Disulfide bonds link cysteine 27-cysteine 58, cysteine 34-cysteine 52, and cysteine 38-cysteine 59.

The protein belongs to the beta-defensin family. Homodimer or homooligomer; disulfide-linked. Post-translationally, O-glycosylated; glycans contain sialic acids alpha(2,3)-linked to galactose and N-acetylgalactosamine. The C-terminal O-glycosylation contributes substantially to the sperm glyocalyx. High-level and epididymis-specific expression. Detected in epithelial cells lining the efferent ductules, initial segment, and cauda regions of the epididymis, but not on spermatozoa.

It localises to the secreted. Functionally, highly glycosylated atypical beta-defensin involved in several aspects of sperm function. Facilitates sperm transport in the female reproductive tract and contributes to sperm protection against immunodetection; both functions are probably implicating the negative surface charge provided by its O-linked oligosaccharides in the sperm glycocalyx. Involved in binding of sperm to oviductal epithelial cells to form a sperm reservoir until ovulation. Release from the sperm surface during capacitation and ovaluation by an elevation of oviductal fluid pH is unmasking other surface components and allows sperm to penetrate the cumulus matrix and bind to the zona pellucida of the oocyte. In vitro has antimicrobial activity and may inhibit LPS-mediated inflammation. In Macaca fascicularis (Crab-eating macaque), this protein is Beta-defensin 126 (DEFB126).